The chain runs to 108 residues: Urease subunit beta (108 aa).

Belongs to the urease beta subunit family. In terms of assembly, heterotrimer of UreA (gamma), UreB (beta) and UreC (alpha) subunits. Three heterotrimers associate to form the active enzyme.

It localises to the cytoplasm. It catalyses the reaction urea + 2 H2O + H(+) = hydrogencarbonate + 2 NH4(+). The protein operates within nitrogen metabolism; urea degradation; CO(2) and NH(3) from urea (urease route): step 1/1. The polypeptide is Urease subunit beta (Chromohalobacter salexigens (strain ATCC BAA-138 / DSM 3043 / CIP 106854 / NCIMB 13768 / 1H11)).